The chain runs to 29 residues: Histone H2B (29 aa).

A disordered region spans residues 1 to 29 (MPEPAKSAPKKGSTRTAAKGGKKRRKSRK). N6-acetyllysine occurs at positions 6 and 11. Phosphoserine is present on Ser13. The segment covering 20–29 (GGKKRRKSRK) has biased composition (basic residues).

The protein belongs to the histone H2B family. In terms of assembly, the nucleosome is a histone octamer containing two molecules each of H2A, H2B, H3 and H4 assembled in one H3-H4 heterotetramer and two H2A-H2B heterodimers. The octamer wraps approximately 147 bp of DNA. Monoubiquitination at the C-terminal Lys gives a specific tag for epigenetic transcriptional activation and is also prerequisite for histone H3 'Lys-4' and 'Lys-79' methylation. Post-translationally, phosphorylated during apoptosis; which facilitates apoptotic chromatin condensation.

The protein resides in the nucleus. It is found in the chromosome. In terms of biological role, core component of nucleosome. Nucleosomes wrap and compact DNA into chromatin, limiting DNA accessibility to the cellular machineries which require DNA as a template. Histones thereby play a central role in transcription regulation, DNA repair, DNA replication and chromosomal stability. DNA accessibility is regulated via a complex set of post-translational modifications of histones, also called histone code, and nucleosome remodeling. This is Histone H2B from Cyprinus carpio (Common carp).